The sequence spans 260 residues: Dehydrogenase/reductase SDR family member 4 (260 aa).

Isoleucine 18–valine 42 contacts NADP(+). Lysine 74 carries the N6-acetyllysine; alternate modification. Lysine 74 carries the post-translational modification N6-succinyllysine; alternate. Substrate is bound at residue serine 151. Tyrosine 164 acts as the Proton acceptor in catalysis. Position 168 (lysine 168) interacts with NADP(+). N6-acetyllysine; alternate is present on lysine 198. Lysine 198 is modified (N6-succinyllysine; alternate). At serine 202 the chain carries Phosphoserine. At lysine 209 the chain carries N6-succinyllysine. The Peroxisomal targeting signal motif lies at serine 258–leucine 260.

It belongs to the short-chain dehydrogenases/reductases (SDR) family. As to quaternary structure, homotetramer. As to expression, detected in liver and kidney. Detected at lower levels in heart, lung, spleen, small intestine, testis, brain and stomach.

It localises to the peroxisome. The catalysed reaction is a secondary alcohol + NADP(+) = a ketone + NADPH + H(+). The enzyme catalyses 3alpha-hydroxy-5beta-pregnan-20-one + NADP(+) = 5beta-pregnan-3,20-dione + NADPH + H(+). It catalyses the reaction 5beta-dihydrotestosterone + NADPH + H(+) = 5beta-androstane-3alpha,17beta-diol + NADP(+). It carries out the reaction all-trans-retinol + NADP(+) = all-trans-retinal + NADPH + H(+). The catalysed reaction is isatin + NADPH + H(+) = 3-hydroxyindolin-2-one + NADP(+). With respect to regulation, inhibited by flavonoids (kaempferol, quercetin, quercitrin, genistein), myristic acid, pyrazole, barbital, phenobarbital and CuSO4. In terms of biological role, NADPH-dependent oxidoreductase which catalyzes the reduction of a variety of compounds bearing carbonyl groups including ketosteroids, alpha-dicarbonyl compounds, aldehydes, aromatic ketones and quinones. Reduces all-trans-retinal and 9-cis retinal. Reduces 3-ketosteroids and benzil into 3alpha-hydroxysteroids and S-benzoin, respectively, in contrast to the stereoselectivity of primates DHRS4s which produce 3beta-hydroxysteroids and R-benzoin. In the reverse reaction, catalyze the NADP-dependent oxidation of 3alpha-hydroxysteroids and alcohol, but with much lower efficiency. Involved in the metabolism of 3alpha-hydroxysteroids, retinoid, isatin and xenobiotic carbonyl compounds. The chain is Dehydrogenase/reductase SDR family member 4 (DHRS4) from Oryctolagus cuniculus (Rabbit).